The primary structure comprises 248 residues: Pyridoxine 5'-phosphate synthase (248 aa).

Residue asparagine 12 participates in 3-amino-2-oxopropyl phosphate binding. 14-15 is a 1-deoxy-D-xylulose 5-phosphate binding site; that stretch reads DH. Arginine 23 contributes to the 3-amino-2-oxopropyl phosphate binding site. Catalysis depends on histidine 48, which acts as the Proton acceptor. 1-deoxy-D-xylulose 5-phosphate is bound by residues arginine 50 and histidine 55. The Proton acceptor role is filled by glutamate 75. Threonine 105 lines the 1-deoxy-D-xylulose 5-phosphate pocket. Histidine 196 functions as the Proton donor in the catalytic mechanism. 3-amino-2-oxopropyl phosphate is bound by residues glycine 197 and 218 to 219; that span reads GH.

This sequence belongs to the PNP synthase family. Homooctamer; tetramer of dimers.

It is found in the cytoplasm. The enzyme catalyses 3-amino-2-oxopropyl phosphate + 1-deoxy-D-xylulose 5-phosphate = pyridoxine 5'-phosphate + phosphate + 2 H2O + H(+). It functions in the pathway cofactor biosynthesis; pyridoxine 5'-phosphate biosynthesis; pyridoxine 5'-phosphate from D-erythrose 4-phosphate: step 5/5. Catalyzes the complicated ring closure reaction between the two acyclic compounds 1-deoxy-D-xylulose-5-phosphate (DXP) and 3-amino-2-oxopropyl phosphate (1-amino-acetone-3-phosphate or AAP) to form pyridoxine 5'-phosphate (PNP) and inorganic phosphate. This Pseudomonas aeruginosa (strain UCBPP-PA14) protein is Pyridoxine 5'-phosphate synthase.